Reading from the N-terminus, the 481-residue chain is MGLALCGAAAQAQEKPNFLIIQCDHLTQRVVGAYGQTQGCTLPIDEVASRGVIFSNAYVGCPLSQPSRAALWSGMMPHQTNVRSNSSEPVNTRLPENVPTLGSLFSESGYEAVHFGKTHDMGSLRGFKHKEPVAKPFTDPEFPVNNDSFLDVGTCEDAVAYLSNPPKEPFICIADFQNPHNICGFIGENAGVHTDRPISGPLPELPDNFDVEDWSNIPTPVQYICCSHRRMTQAAHWNEENYRHYIAAFQHYTKMVSKQVDSVLKALYSTPAGRNTIVVIMADHGDGMASHRMVTKHISFYDEMTNVPFIFAGPGIKQQKKPVDHLLTQPTLDLLPTLCDLAGIAVPAEKAGISLAPTLRGEKQKKSHPYVVSEWHSEYEYVTTPGRMVRGPRYKYTHYLEGNGEELYDMKKDPGERKNLAKDPKYSKILAEHRALLDDYITRSKDDYRSLKVDADPRCRNHTPGYPSHEGPGAREILKRK.

Position 64 is a 3-oxoalanine (Ser) (S64). Residues C225, C226, H462, and H469 each coordinate Zn(2+). Positions 453-481 (VDADPRCRNHTPGYPSHEGPGAREILKRK) are disordered. The segment covering 472–481 (PGAREILKRK) has biased composition (basic and acidic residues).

It belongs to the sulfatase family. Requires Zn(2+) as cofactor. Post-translationally, the conversion to 3-oxoalanine (also known as C-formylglycine, FGly), of a serine or cysteine residue in prokaryotes and of a cysteine residue in eukaryotes, is critical for catalytic activity.

Functionally, exosulfatase involved in the degradation of the glycosaminoglycans (GAGs) chondroitin sulfate (CS), dermatan sulfate (DS) and heparan sulfate (HS). 2-O-sulfatase active on unsaturated non-reducing end hexuronate units. Has a slight preference for HS-derived structures. GAG-specific sulfatases play a key role in the persistence of the major human gut symbiont B.thetaiotaomicron in the host gastrointestinal tract. The chain is Delta 4,5-hexuronate-2-O-sulfatase from Bacteroides thetaiotaomicron (strain ATCC 29148 / DSM 2079 / JCM 5827 / CCUG 10774 / NCTC 10582 / VPI-5482 / E50).